The sequence spans 354 residues: Uroporphyrinogen decarboxylase (354 aa).

Substrate is bound by residues Arg-27–Arg-31, Asp-77, Tyr-154, Thr-209, and His-327.

It belongs to the uroporphyrinogen decarboxylase family. As to quaternary structure, homodimer.

It is found in the cytoplasm. The catalysed reaction is uroporphyrinogen III + 4 H(+) = coproporphyrinogen III + 4 CO2. It functions in the pathway porphyrin-containing compound metabolism; protoporphyrin-IX biosynthesis; coproporphyrinogen-III from 5-aminolevulinate: step 4/4. Its function is as follows. Catalyzes the decarboxylation of four acetate groups of uroporphyrinogen-III to yield coproporphyrinogen-III. This chain is Uroporphyrinogen decarboxylase, found in Mannheimia succiniciproducens (strain KCTC 0769BP / MBEL55E).